A 257-amino-acid polypeptide reads, in one-letter code: MTSQINNEFLSLDVLPKHIAVIMDGNGRWAKAQGKPRVFGHKAGVDAVRKTISAASKLGINAITLFAFSSENWRRPEEEVSVLMELFITVLSREVKRLHKNNIQLRIIGETSQFSSRLQKKIVEAETLTSENTGLVLNVAANYGGKWDITQAVRRLAYQVERGNLQADDIDEDLIASKLTMSDLPEVDLMIRTSGECRISNFMLWQMAYAEFYFTDQYWPDFNEQSLADAVAWFVSRERRFGCTGEQIQALMNEKDQ.

Residue Asp-24 is part of the active site. Asp-24 provides a ligand contact to Mg(2+). Substrate-binding positions include 25 to 28 (GNGR), Trp-29, Arg-37, His-41, and 69 to 71 (SSE). Residue Asn-72 is the Proton acceptor of the active site. Residues Trp-73, Arg-75, Arg-192, and 198–200 (RIS) contribute to the substrate site. Glu-211 contacts Mg(2+).

It belongs to the UPP synthase family. As to quaternary structure, homodimer. Requires Mg(2+) as cofactor.

The enzyme catalyses 8 isopentenyl diphosphate + (2E,6E)-farnesyl diphosphate = di-trans,octa-cis-undecaprenyl diphosphate + 8 diphosphate. Its function is as follows. Catalyzes the sequential condensation of isopentenyl diphosphate (IPP) with (2E,6E)-farnesyl diphosphate (E,E-FPP) to yield (2Z,6Z,10Z,14Z,18Z,22Z,26Z,30Z,34E,38E)-undecaprenyl diphosphate (di-trans,octa-cis-UPP). UPP is the precursor of glycosyl carrier lipid in the biosynthesis of bacterial cell wall polysaccharide components such as peptidoglycan and lipopolysaccharide. This is Ditrans,polycis-undecaprenyl-diphosphate synthase ((2E,6E)-farnesyl-diphosphate specific) from Aliivibrio fischeri (strain ATCC 700601 / ES114) (Vibrio fischeri).